A 93-amino-acid chain; its full sequence is ATP-dependent Clp protease adapter protein ClpS (93 aa).

This sequence belongs to the ClpS family. In terms of assembly, binds to the N-terminal domain of the chaperone ClpA.

Its function is as follows. Involved in the modulation of the specificity of the ClpAP-mediated ATP-dependent protein degradation. The chain is ATP-dependent Clp protease adapter protein ClpS from Gloeobacter violaceus (strain ATCC 29082 / PCC 7421).